The chain runs to 181 residues: Adenine phosphoribosyltransferase (181 aa).

Belongs to the purine/pyrimidine phosphoribosyltransferase family. As to quaternary structure, homodimer.

The protein localises to the cytoplasm. It catalyses the reaction AMP + diphosphate = 5-phospho-alpha-D-ribose 1-diphosphate + adenine. It functions in the pathway purine metabolism; AMP biosynthesis via salvage pathway; AMP from adenine: step 1/1. Its function is as follows. Catalyzes a salvage reaction resulting in the formation of AMP, that is energically less costly than de novo synthesis. The polypeptide is Adenine phosphoribosyltransferase (Aliivibrio fischeri (strain ATCC 700601 / ES114) (Vibrio fischeri)).